We begin with the raw amino-acid sequence, 318 residues long: Olfactory receptor 5G25 (318 aa).

At 1 to 25 (MMHRNQTVVTEFFFTGLTSSFHLQI) the chain is on the extracellular side. N5 is a glycosylation site (N-linked (GlcNAc...) asparagine). A helical transmembrane segment spans residues 26–46 (VLFLTFLCVYLATLLGNLGMI). The Cytoplasmic portion of the chain corresponds to 47–54 (ILIHQDTR). A helical transmembrane segment spans residues 55–75 (LHIPMYFFLSHLSFVDACSSS). At 76-99 (VISPKMLSDIFVDKKVISFLGCAI) the chain is on the extracellular side. An intrachain disulfide couples C97 to C189. The chain crosses the membrane as a helical span at residues 100–120 (QFCLFSQFVVTECFLLASMAY). Residues 121–133 (DRYVAICKPLLYT) lie on the Cytoplasmic side of the membrane. The chain crosses the membrane as a helical span at residues 134-154 (LIMSQRVCVQLVIGPYSIGLI). Over 155 to 196 (STVVHTTSAFILPYCGPNLINHFFCDLLPVLSLACADTQMNK) the chain is Extracellular. Residues 197–217 (HLLFIMAGILGVFSGIIILVS) traverse the membrane as a helical segment. The Cytoplasmic portion of the chain corresponds to 218–237 (YVYIAITILKINSADGRRKA). Residues 238 to 258 (FSTCSSHLTAVSILYGTLFFI) form a helical membrane-spanning segment. Over 259-271 (YVRPSSSFSLDIN) the chain is Extracellular. Residues 272–292 (KVVSLFYTAVIPMLNPFIYSL) traverse the membrane as a helical segment. Topologically, residues 293-318 (RNKEVKDALIRTFEKKFCYSLQDKIL) are cytoplasmic.

The protein belongs to the G-protein coupled receptor 1 family.

The protein localises to the cell membrane. In terms of biological role, potential odorant receptor. This chain is Olfactory receptor 5G25, found in Mus musculus (Mouse).